The sequence spans 902 residues: Protein translocase subunit SecA (902 aa).

ATP is bound by residues glutamine 87, 105–109, and aspartate 512; that span reads GEGKT. Disordered stretches follow at residues 565–584 and 840–902; these read RRIDNQLRGRSGRQGDPGSS and VEEQ…GKLK. Basic and acidic residues-rich tracts occupy residues 840–859 and 873–882; these read VEEQRRQADDVPKNFEHEDA and QVREGAKVGR. Zn(2+)-binding residues include cysteine 886, cysteine 888, cysteine 897, and histidine 898. Positions 892–902 are enriched in basic residues; it reads KKYKQCHGKLK.

The protein belongs to the SecA family. In terms of assembly, monomer and homodimer. Part of the essential Sec protein translocation apparatus which comprises SecA, SecYEG and auxiliary proteins SecDF-YajC and YidC. It depends on Zn(2+) as a cofactor.

Its subcellular location is the cell inner membrane. The protein localises to the cytoplasm. It carries out the reaction ATP + H2O + cellular proteinSide 1 = ADP + phosphate + cellular proteinSide 2.. Its function is as follows. Part of the Sec protein translocase complex. Interacts with the SecYEG preprotein conducting channel. Has a central role in coupling the hydrolysis of ATP to the transfer of proteins into and across the cell membrane, serving both as a receptor for the preprotein-SecB complex and as an ATP-driven molecular motor driving the stepwise translocation of polypeptide chains across the membrane. This chain is Protein translocase subunit SecA, found in Alteromonas mediterranea (strain DSM 17117 / CIP 110805 / LMG 28347 / Deep ecotype).